The sequence spans 638 residues: UvrABC system protein C (638 aa).

Positions 20–97 (ECAGVYQMFD…IKKFQPKFNI (78 aa)) constitute a GIY-YIG domain. The UVR domain maps to 209–244 (KELQENLSKKMEELSSHMYFEEAAEIRDRIKALSYV).

This sequence belongs to the UvrC family. As to quaternary structure, interacts with UvrB in an incision complex.

The protein resides in the cytoplasm. Functionally, the UvrABC repair system catalyzes the recognition and processing of DNA lesions. UvrC both incises the 5' and 3' sides of the lesion. The N-terminal half is responsible for the 3' incision and the C-terminal half is responsible for the 5' incision. The sequence is that of UvrABC system protein C from Rickettsia canadensis (strain McKiel).